The primary structure comprises 609 residues: MRMPYEIKKVFASLPQVERGVSKIIGGDPKGNNFLYTNGKCVVIRNIDNPAIADIYTEHAHQVVVAKYAPSGFYIASGDVSGKLRIWDTTQKEHLLKYEYQPFAGKIKDLAWTEDSKRIAVVGEGREKFGAVFLWDSGSSVGEITGHNKVINSVDIKQTRPYRLATGSDDNCAAFFEGPPFKFKFTLSDHTRFVNCVRFSPDGNRFATASADGQIFIYDGKTGEKVCALGGGKAHDGGIYAISWSPDSSQLLSASGDKTAKIWDVGANSVVSTFNMGSNVLDQQLGCLWQKDHLLSLSLSGYINYLDKNNPDKPLRVIKGHSKSIQCLTVHKNGGKSYIYSGSNDGHINYWDSDTGENDGFSGKGHTNQVSRMAVDEMDQLVTCSMDDTVRYTNLSKRDYSGQDAVKMDVQPKCLAVGPGGYTVVLCIGQIVLMKDKKKCFAIDDLGYEPEAVAVHPGGGSVAVGGTDGNVRLYSIQGTSLKSDDKTLEAKGPVTDLAYSHDGAFLAVCDANKVVTVFSVPDGYVEHNVFYGHHAKVVCIAWSPDNEHFASGGMDMMVYVWTVSDPETRIKIPDAHRLHHVSGLAWLDEHTLVTTSHDASVKEWSISYN.

13 WD repeats span residues 6–47, 50–89, 95–137, 140–178, 182–220, 226–265, 272–308, 313–353, 360–410, 434–476, 482–520, 525–563, and 568–606; these read EIKK…IRNI, PAIADIYTEHAHQVVVAKYAPSGFYIASGDVSGKLRIWDT, LLKY…LWDS, SVGEITGHNKVINSVDIKQTRPYRLATGSDDNCAAFFEG, KFKFTLSDHTRFVNCVRFSPDGNRFATASADGQIFIYDG, VCALGGGKAHDGGIYAISWSPDSSQLLSASGDKTAKIWDV, STFNMGSNVLDQQLGCLWQKDHLLSLSLSGYINYLDK, KPLR…YWDS, GFSG…KMDV, MKDK…LYSI, KSDDKTLEAKGPVTDLAYSHDGAFLAVCDANKVVTVFSV, VEHNVFYGHHAKVVCIAWSPDNEHFASGGMDMMVYVWTV, and TRIKIPDAHRLHHVSGLAWLDEHTLVTTSHDASVKEWSI.

Belongs to the WD repeat AIP1 family.

The protein localises to the cytoplasm. It is found in the cytoskeleton. Its function is as follows. Induces disassembly of actin filaments in conjunction with ADF/cofilin family proteins. Enhances cofilin-mediated actin severing. In Gallus gallus (Chicken), this protein is WD repeat-containing protein 1 (WDR1).